The chain runs to 391 residues: Protein-glutamate methylesterase/protein-glutamine glutaminase (391 aa).

One can recognise a Response regulatory domain in the interval 4–121; the sequence is KVLVVDDSSF…ARNNEDAIKL (118 aa). Residue Asp-55 is modified to 4-aspartylphosphate. In terms of domain architecture, CheB-type methylesterase spans 197–391; sequence SGKHYQLVAI…IRLKTEVGCG (195 aa). Catalysis depends on residues Ser-209, His-236, and Asp-333.

Belongs to the CheB family. In terms of processing, phosphorylated by CheA. Phosphorylation of the N-terminal regulatory domain activates the methylesterase activity.

The protein localises to the cytoplasm. It carries out the reaction [protein]-L-glutamate 5-O-methyl ester + H2O = L-glutamyl-[protein] + methanol + H(+). The enzyme catalyses L-glutaminyl-[protein] + H2O = L-glutamyl-[protein] + NH4(+). Its function is as follows. Involved in chemotaxis. Part of a chemotaxis signal transduction system that modulates chemotaxis in response to various stimuli. Catalyzes the demethylation of specific methylglutamate residues introduced into the chemoreceptors (methyl-accepting chemotaxis proteins or MCP) by CheR. Also mediates the irreversible deamidation of specific glutamine residues to glutamic acid. In Pseudoalteromonas translucida (strain TAC 125), this protein is Protein-glutamate methylesterase/protein-glutamine glutaminase.